The following is a 352-amino-acid chain: MTIAIGKSEQKRGLFDVADDWLRRDRFVFVGWSGLLLLPCAYFALGGWLTGTTFVTSWYTHGLASSYLEGCNFLTAAVSTPPNCMGHSLLLLWGPEAQSDFTRWCQLGGLWTFVALHGSFGLIGFMLRQFEIARAVKIRPYNAIAFSGPIAVFVSVFLIYPLGQAGWFFAPSFGVAAIFRFILFFQGFHNWTLNPFHMMGVAGILGAALLCAIHGATVENTLFEDGDGANTFRAFNPTQAEETYSMVTANRFWSQIFGVAFSNKRWLHFFMLFVPVTGLWMSALGVVGLALNLRAYDFVSQEIRAAEDPEFETFYTKNNLLNEGIRAWMAAQDQPHERLVFPEEVLPRGNAL.

The residue at position 2 (threonine 2) is an N-acetylthreonine. Threonine 2 is subject to Phosphothreonine. The helical transmembrane segment at 40–60 threads the bilayer; sequence CAYFALGGWLTGTTFVTSWYT. A chlorophyll a-binding site is contributed by histidine 117. The helical transmembrane segment at 124 to 140 threads the bilayer; the sequence is GFMLRQFEIARAVKIRP. Positions 129 and 142 each coordinate pheophytin a. The helical transmembrane segment at 152–165 threads the bilayer; that stretch reads VFVSVFLIYPLGQA. Histidine 197 is a chlorophyll a binding site. Residues 207–227 form a helical membrane-spanning segment; it reads AALLCAIHGATVENTLFEDGD. Residues histidine 214 and phenylalanine 261 each contribute to the a plastoquinone site. Histidine 214 is a binding site for Fe cation. Residue histidine 268 participates in Fe cation binding. The helical transmembrane segment at 278–294 threads the bilayer; sequence GLWMSALGVVGLALNLR.

Belongs to the reaction center PufL/M/PsbA/D family. PSII is composed of 1 copy each of membrane proteins PsbA, PsbB, PsbC, PsbD, PsbE, PsbF, PsbH, PsbI, PsbJ, PsbK, PsbL, PsbM, PsbT, PsbX, PsbY, PsbZ, Psb30/Ycf12, at least 3 peripheral proteins of the oxygen-evolving complex and a large number of cofactors. It forms dimeric complexes. It depends on The D1/D2 heterodimer binds P680, chlorophylls that are the primary electron donor of PSII, and subsequent electron acceptors. It shares a non-heme iron and each subunit binds pheophytin, quinone, additional chlorophylls, carotenoids and lipids. There is also a Cl(-1) ion associated with D1 and D2, which is required for oxygen evolution. The PSII complex binds additional chlorophylls, carotenoids and specific lipids. as a cofactor.

Its subcellular location is the plastid. The protein resides in the chloroplast thylakoid membrane. The catalysed reaction is 2 a plastoquinone + 4 hnu + 2 H2O = 2 a plastoquinol + O2. Photosystem II (PSII) is a light-driven water:plastoquinone oxidoreductase that uses light energy to abstract electrons from H(2)O, generating O(2) and a proton gradient subsequently used for ATP formation. It consists of a core antenna complex that captures photons, and an electron transfer chain that converts photonic excitation into a charge separation. The D1/D2 (PsbA/PsbD) reaction center heterodimer binds P680, the primary electron donor of PSII as well as several subsequent electron acceptors. D2 is needed for assembly of a stable PSII complex. The protein is Photosystem II D2 protein of Tupiella akineta (Green alga).